A 346-amino-acid chain; its full sequence is Probable RNA methyltransferase PSPA7_3453 (346 aa).

The active-site Proton acceptor is glutamate 91. In terms of domain architecture, Radical SAM core spans 94 to 320 (LLPRGGLCVS…TKVRNSAGQD (227 aa)). Cysteine 101 and cysteine 325 form a disulfide bridge. Positions 108, 112, and 115 each coordinate [4Fe-4S] cluster. S-adenosyl-L-methionine is bound by residues 153-154 (GE), serine 183, 206-208 (SLH), and asparagine 282. Cysteine 325 acts as the S-methylcysteine intermediate in catalysis.

Belongs to the radical SAM superfamily. RlmN family. The cofactor is [4Fe-4S] cluster.

It is found in the cytoplasm. This is Probable RNA methyltransferase PSPA7_3453 from Pseudomonas paraeruginosa (strain DSM 24068 / PA7) (Pseudomonas aeruginosa (strain PA7)).